We begin with the raw amino-acid sequence, 325 residues long: Phospho-N-acetylmuramoyl-pentapeptide-transferase (325 aa).

10 helical membrane passes run 3-23 (LMIY…PILI), 48-68 (GTPT…VFVV), 79-99 (AIFA…LKII), 106-126 (LKAY…GFYA), 136-156 (IIVP…PFII), 174-194 (GLAT…SYAT), 199-219 (LAVF…YNAY), 223-243 (VFMG…VAMM), 246-266 (LPLI…SVIL), and 298-318 (IVSI…LSLI).

It belongs to the glycosyltransferase 4 family. MraY subfamily. The cofactor is Mg(2+).

Its subcellular location is the cell membrane. The catalysed reaction is UDP-N-acetyl-alpha-D-muramoyl-L-alanyl-gamma-D-glutamyl-meso-2,6-diaminopimeloyl-D-alanyl-D-alanine + di-trans,octa-cis-undecaprenyl phosphate = di-trans,octa-cis-undecaprenyl diphospho-N-acetyl-alpha-D-muramoyl-L-alanyl-D-glutamyl-meso-2,6-diaminopimeloyl-D-alanyl-D-alanine + UMP. The protein operates within cell wall biogenesis; peptidoglycan biosynthesis. Functionally, catalyzes the initial step of the lipid cycle reactions in the biosynthesis of the cell wall peptidoglycan: transfers peptidoglycan precursor phospho-MurNAc-pentapeptide from UDP-MurNAc-pentapeptide onto the lipid carrier undecaprenyl phosphate, yielding undecaprenyl-pyrophosphoryl-MurNAc-pentapeptide, known as lipid I. The chain is Phospho-N-acetylmuramoyl-pentapeptide-transferase from Clostridium novyi (strain NT).